The following is a 76-amino-acid chain: UPF0291 protein BA_1897/GBAA_1897/BAS1759 (76 aa).

The protein belongs to the UPF0291 family.

Its subcellular location is the cytoplasm. The chain is UPF0291 protein BA_1897/GBAA_1897/BAS1759 from Bacillus anthracis.